Here is a 566-residue protein sequence, read N- to C-terminus: MVTENPQRLTVLRLATNKGPLAQIWLASNMSNIPRGSVIQTHIAESAKEIAKASGCDDESGDNEYITLRTSGELLQGIVRVYSKQATFLLTDIKDTLTKISMLFKTSQKMTSTVNRLNTVTRVHQLMLEDAVTEREVLVTPGLEFLDDTTIPVGLMAQENSMERKVQGAAPWDTSLEVGRRFSPDEDFEHNNLSSMNLDFDIEEGPITSKSWEEGTRQSSRNFDTHENYIQDDDFPLDDAGTIGWDLGITEKNDQNNDDDDNSVEQGRRLGESIMSEEPTDFGFDLDIEKEAPAGNIDTITDAMTESQPKQTGTRRNSKLLNTKSIQIDEETENSESIASSNTYKEERSNNLLTPQPTNFTTKRLWSEITESMSYLPDPILKNFLSYESLKKRKIHNGREGSIEEPELNVSLNLTDDVISNAGTNDNSFNELTDNMSDFVPIDAGLNEAPFPEENIIDAKTRNEQTTIQTEKVRPTPGEVASKAIVQMAKILRKELSEEKEVIFTDVLKSQANTEPENITKREASRGFFDILSLATEGCIGLSQTEAFGNIKIDAKPALFERFINA.

Ser161 carries the phosphoserine modification. Position 175 is a phosphoserine; by CDC5 (Ser175). Lys210 carries the post-translational modification N6-acetyllysine; by ECO1. Position 263 is a phosphoserine; by CDC5 (Ser263). The residue at position 307 (Ser307) is a Phosphoserine. The interval 325–356 (SIQIDEETENSESIASSNTYKEERSNNLLTPQ) is disordered. Thr354 bears the Phosphothreonine mark.

Belongs to the rad21 family. As to quaternary structure, interacts directly with IRR1/SCC3 in cohesin complex. Cohesin complexes are composed of the SMC1 and SMC3 heterodimer attached via their hinge domain, MCD1/SCC1 which link them, and IRR1, which interacts with MCD1. The cohesin complex also interacts with SCC2, which is required for its association with chromosomes. In terms of processing, cleaved by ESP1 at the onset of anaphase. Phosphorylated by CDC5/Polo-like kinase at the onset of anaphase. Phosphorylation takes places at proximity to cleavage sites and is required for an efficient cleavage by ESP1. Post-translationally, acetylated by ECO1.

The protein localises to the nucleus. It is found in the chromosome. The protein resides in the centromere. Functionally, cleavable component of the cohesin complex involved in chromosome cohesion during cell cycle. The cohesin complex is required for the cohesion of sister chromatids after DNA replication. The cohesin complex apparently forms a large proteinaceous ring within which sister chromatids can be trapped. At metaphase-anaphase transition, this protein is cleaved by ESP1 and dissociates from chromatin, allowing sister chromatids to segregate. This Saccharomyces cerevisiae (strain ATCC 204508 / S288c) (Baker's yeast) protein is Sister chromatid cohesion protein 1 (MCD1).